Consider the following 1023-residue polypeptide: StAR-related lipid transfer protein 8 (1023 aa).

Disordered stretches follow at residues 46 to 67 (PMGS…SSCE) and 82 to 161 (TVSL…KVSK). Residues 99–114 (PSSSDRPLLSPTQGQE) are compositionally biased toward polar residues. Phosphoserine is present on S108. Basic residues predominate over residues 120–130 (AKKRHRNRSFL). A compositionally biased stretch (polar residues) spans 143–161 (GSQQAEPKHSPATSEKVSK). R169 carries the post-translational modification Asymmetric dimethylarginine. Residues S235 and S238 each carry the phosphoserine modification. Positions 387–397 (PAQAPAEAEPV) are enriched in low complexity. 2 disordered regions span residues 387–461 (PAQA…MNEA) and 467–486 (LAGL…VGAS). The segment covering 441–459 (ISDTVASSSELDSSGNSMN) has biased composition (polar residues). Residues S498 and S506 each carry the phosphoserine modification. The Rho-GAP domain maps to 573-777 (PPLIHVQRTG…HMISDCKKLF (205 aa)). A disordered region spans residues 733 to 757 (KKDSPSPRIKSKRSLIGRPGPRDLS). An START domain is found at 809-1017 (AQAAGVSLSL…RDSFPTLQAA (209 aa)).

As to quaternary structure, binds both the SH2 and PTB domains of TNS1. Widely expressed with highest levels in kidney, lung and placenta.

It localises to the cell junction. Its subcellular location is the focal adhesion. Accelerates GTPase activity of RHOA and CDC42, but not RAC1. Stimulates the hydrolysis of phosphatidylinositol 4,5-bisphosphate by PLCD1. The sequence is that of StAR-related lipid transfer protein 8 (STARD8) from Homo sapiens (Human).